The chain runs to 718 residues: uncharacterized protein (718 aa).

The next 6 helical transmembrane spans lie at 9-29 (VIST…IWFF), 60-80 (NVFF…LHIG), 83-103 (IQYI…GAVG), 136-156 (VMIL…YLFF), 391-411 (IVVF…GYWI), and 506-526 (LLDT…LWPD).

This sequence belongs to the YccS/YhfK family.

The protein resides in the cell membrane. This is an uncharacterized protein from Haemophilus influenzae (strain ATCC 51907 / DSM 11121 / KW20 / Rd).